Consider the following 163-residue polypeptide: MIPLVPTSKTEIDKLEHVLILGTLFRPEILELIKDPIEKVTWVDSLAIAAGALAREKAGYTIREIADELGRTEQTIRKHLKGETKAGKLVRETYEMMKRGELNIEEVEKFLEAVVRKEELEKITDIKKLEEEIEKLKKENEELAAKLEKVKEKLKEVLSELEK.

This is an uncharacterized protein from Methanocaldococcus jannaschii (strain ATCC 43067 / DSM 2661 / JAL-1 / JCM 10045 / NBRC 100440) (Methanococcus jannaschii).